Reading from the N-terminus, the 264-residue chain is Proteasome subunit beta type-4 (264 aa).

Met-1 is subject to N-acetylmethionine. Positions 1–45 are excised as a propeptide; that stretch reads MEAFWESRAGHWAGGPAPGQFYRIPATPSGLMDPASAPCEGPITR. Tyr-102 is modified (phosphotyrosine).

This sequence belongs to the peptidase T1B family. In terms of assembly, the 26S proteasome consists of a 20S proteasome core and two 19S regulatory subunits. The 20S proteasome core is a barrel-shaped complex made of 28 subunits that are arranged in four stacked rings. The two outer rings are each formed by seven alpha subunits, and the two inner rings are formed by seven beta subunits. The proteolytic activity is exerted by three beta-subunits PSMB5, PSMB6 and PSMB7. Forms a ternary complex with SMAD1 and OAZ1 before PSMB4 is incorporated into the 20S proteasome. Interacts with PRPF19. As to expression, detected in liver (at protein level).

It is found in the cytoplasm. Its subcellular location is the nucleus. In terms of biological role, non-catalytic component of the 20S core proteasome complex involved in the proteolytic degradation of most intracellular proteins. This complex plays numerous essential roles within the cell by associating with different regulatory particles. Associated with two 19S regulatory particles, forms the 26S proteasome and thus participates in the ATP-dependent degradation of ubiquitinated proteins. The 26S proteasome plays a key role in the maintenance of protein homeostasis by removing misfolded or damaged proteins that could impair cellular functions, and by removing proteins whose functions are no longer required. Associated with the PA200 or PA28, the 20S proteasome mediates ubiquitin-independent protein degradation. This type of proteolysis is required in several pathways including spermatogenesis (20S-PA200 complex) or generation of a subset of MHC class I-presented antigenic peptides (20S-PA28 complex). SMAD1/OAZ1/PSMB4 complex mediates the degradation of the CREBBP/EP300 repressor SNIP1. This chain is Proteasome subunit beta type-4 (Psmb4), found in Mus musculus (Mouse).